We begin with the raw amino-acid sequence, 353 residues long: Photosystem II D2 protein (353 aa).

Position 2 is an N-acetylthreonine (Thr-2). Thr-2 is subject to Phosphothreonine. A helical membrane pass occupies residues 41–61 (CAYFAVGGWFTGTTFVTSWYT). His-118 lines the chlorophyll a pocket. Residues 125–141 (GFMLRQFELARSVQLRP) form a helical membrane-spanning segment. 2 residues coordinate pheophytin a: Gln-130 and Asn-143. A helical transmembrane segment spans residues 153–166 (VFVSVFLIYPLGQS). Residue His-198 participates in chlorophyll a binding. A helical membrane pass occupies residues 208-228 (AALLCAIHGATVENTLFEDGD). A plastoquinone is bound by residues His-215 and Phe-262. Residue His-215 coordinates Fe cation. His-269 is a binding site for Fe cation. The chain crosses the membrane as a helical span at residues 279 to 295 (GLWMSALGVVGLALNLR).

Belongs to the reaction center PufL/M/PsbA/D family. PSII is composed of 1 copy each of membrane proteins PsbA, PsbB, PsbC, PsbD, PsbE, PsbF, PsbH, PsbI, PsbJ, PsbK, PsbL, PsbM, PsbT, PsbX, PsbY, PsbZ, Psb30/Ycf12, at least 3 peripheral proteins of the oxygen-evolving complex and a large number of cofactors. It forms dimeric complexes. The cofactor is The D1/D2 heterodimer binds P680, chlorophylls that are the primary electron donor of PSII, and subsequent electron acceptors. It shares a non-heme iron and each subunit binds pheophytin, quinone, additional chlorophylls, carotenoids and lipids. There is also a Cl(-1) ion associated with D1 and D2, which is required for oxygen evolution. The PSII complex binds additional chlorophylls, carotenoids and specific lipids..

It localises to the plastid. Its subcellular location is the chloroplast thylakoid membrane. It carries out the reaction 2 a plastoquinone + 4 hnu + 2 H2O = 2 a plastoquinol + O2. Functionally, photosystem II (PSII) is a light-driven water:plastoquinone oxidoreductase that uses light energy to abstract electrons from H(2)O, generating O(2) and a proton gradient subsequently used for ATP formation. It consists of a core antenna complex that captures photons, and an electron transfer chain that converts photonic excitation into a charge separation. The D1/D2 (PsbA/PsbD) reaction center heterodimer binds P680, the primary electron donor of PSII as well as several subsequent electron acceptors. D2 is needed for assembly of a stable PSII complex. This is Photosystem II D2 protein from Lactuca sativa (Garden lettuce).